We begin with the raw amino-acid sequence, 784 residues long: LPS-assembly protein LptD (784 aa).

A signal peptide spans 1–24; that stretch reads MKKRIPTLLATMIATALYSQQGLA. 2 cysteine pairs are disulfide-bonded: cysteine 31/cysteine 724 and cysteine 173/cysteine 725.

The protein belongs to the LptD family. Component of the lipopolysaccharide transport and assembly complex. Interacts with LptE and LptA. In terms of processing, contains two intramolecular disulfide bonds.

Its subcellular location is the cell outer membrane. In terms of biological role, together with LptE, is involved in the assembly of lipopolysaccharide (LPS) at the surface of the outer membrane. This chain is LPS-assembly protein LptD, found in Shigella flexneri serotype 5b (strain 8401).